The following is a 171-amino-acid chain: S-ribosylhomocysteine lyase (171 aa).

The Fe cation site is built by H54, H58, and C128.

Belongs to the LuxS family. As to quaternary structure, homodimer. The cofactor is Fe cation.

The enzyme catalyses S-(5-deoxy-D-ribos-5-yl)-L-homocysteine = (S)-4,5-dihydroxypentane-2,3-dione + L-homocysteine. In terms of biological role, involved in the synthesis of autoinducer 2 (AI-2) which is secreted by bacteria and is used to communicate both the cell density and the metabolic potential of the environment. The regulation of gene expression in response to changes in cell density is called quorum sensing. Catalyzes the transformation of S-ribosylhomocysteine (RHC) to homocysteine (HC) and 4,5-dihydroxy-2,3-pentadione (DPD). The protein is S-ribosylhomocysteine lyase of Edwardsiella ictaluri (strain 93-146).